The following is a 96-amino-acid chain: Small ribosomal subunit protein bS21 (96 aa).

The segment covering 37 to 52 (EKPSEKKAREKAEAVR) has biased composition (basic and acidic residues). The tract at residues 37 to 96 (EKPSEKKAREKAEAVRRARKLARKKLQREGLLPSKPKPVFGADRGRGAAGGAGGAPRPAR) is disordered. Residues 53 to 62 (RARKLARKKL) show a composition bias toward basic residues.

The protein belongs to the bacterial ribosomal protein bS21 family.

The chain is Small ribosomal subunit protein bS21 from Afipia carboxidovorans (strain ATCC 49405 / DSM 1227 / KCTC 32145 / OM5) (Oligotropha carboxidovorans).